Consider the following 70-residue polypeptide: Ribosome modulation factor (70 aa).

Belongs to the ribosome modulation factor family.

Its subcellular location is the cytoplasm. Its function is as follows. During stationary phase, converts 70S ribosomes to an inactive dimeric form (100S ribosomes). The chain is Ribosome modulation factor from Marinobacter adhaerens (strain DSM 23420 / HP15).